Consider the following 369-residue polypeptide: Anhydro-N-acetylmuramic acid kinase (369 aa).

12-19 lines the ATP pocket; that stretch reads GTSMDGVD.

The protein belongs to the anhydro-N-acetylmuramic acid kinase family.

The enzyme catalyses 1,6-anhydro-N-acetyl-beta-muramate + ATP + H2O = N-acetyl-D-muramate 6-phosphate + ADP + H(+). The protein operates within amino-sugar metabolism; 1,6-anhydro-N-acetylmuramate degradation. It participates in cell wall biogenesis; peptidoglycan recycling. Catalyzes the specific phosphorylation of 1,6-anhydro-N-acetylmuramic acid (anhMurNAc) with the simultaneous cleavage of the 1,6-anhydro ring, generating MurNAc-6-P. Is required for the utilization of anhMurNAc either imported from the medium or derived from its own cell wall murein, and thus plays a role in cell wall recycling. This chain is Anhydro-N-acetylmuramic acid kinase, found in Shewanella baltica (strain OS223).